The sequence spans 381 residues: Chaperone protein DnaJ (381 aa).

The region spanning 5-70 (DYYEVLGVSR…DKKAAYDRYG (66 aa)) is the J domain. A CR-type zinc finger spans residues 140–218 (GVQKTINVPA…CHGAGRVEKE (79 aa)). Zn(2+) is bound by residues Cys-153, Cys-156, Cys-170, Cys-173, Cys-192, Cys-195, Cys-206, and Cys-209. 4 CXXCXGXG motif repeats span residues 153–160 (CDACKGTG), 170–177 (CPTCSGMG), 192–199 (CPTCNGMG), and 206–213 (CKVCHGAG).

The protein belongs to the DnaJ family. As to quaternary structure, homodimer. Zn(2+) is required as a cofactor.

It is found in the cytoplasm. Participates actively in the response to hyperosmotic and heat shock by preventing the aggregation of stress-denatured proteins and by disaggregating proteins, also in an autonomous, DnaK-independent fashion. Unfolded proteins bind initially to DnaJ; upon interaction with the DnaJ-bound protein, DnaK hydrolyzes its bound ATP, resulting in the formation of a stable complex. GrpE releases ADP from DnaK; ATP binding to DnaK triggers the release of the substrate protein, thus completing the reaction cycle. Several rounds of ATP-dependent interactions between DnaJ, DnaK and GrpE are required for fully efficient folding. Also involved, together with DnaK and GrpE, in the DNA replication of plasmids through activation of initiation proteins. This Cereibacter sphaeroides (strain KD131 / KCTC 12085) (Rhodobacter sphaeroides) protein is Chaperone protein DnaJ.